We begin with the raw amino-acid sequence, 340 residues long: Alcohol dehydrogenase (340 aa).

Zn(2+) contacts are provided by cysteine 37, histidine 58, cysteine 89, cysteine 92, cysteine 95, cysteine 103, and cysteine 145.

The protein belongs to the zinc-containing alcohol dehydrogenase family. It depends on Zn(2+) as a cofactor.

The enzyme catalyses a primary alcohol + NAD(+) = an aldehyde + NADH + H(+). The catalysed reaction is a secondary alcohol + NAD(+) = a ketone + NADH + H(+). This Staphylococcus epidermidis (strain ATCC 12228 / FDA PCI 1200) protein is Alcohol dehydrogenase (adh).